Here is a 341-residue protein sequence, read N- to C-terminus: Ketol-acid reductoisomerase (NADP(+)) (341 aa).

Residues 2–181 enclose the KARI N-terminal Rossmann domain; the sequence is AKVYYNGDVN…GAARAGVLET (180 aa). NADP(+) is bound by residues 25–28, Arg48, Ser52, and 82–85; these read YGSQ and DEHQ. His107 is a catalytic residue. Gly133 is an NADP(+) binding site. The KARI C-terminal knotted domain occupies 182-327; the sequence is TFKEETETDL…RELREMMPFV (146 aa). Mg(2+) is bound by residues Asp190, Glu194, Glu226, and Glu230. Position 251 (Ser251) interacts with substrate.

The protein belongs to the ketol-acid reductoisomerase family. Requires Mg(2+) as cofactor.

The enzyme catalyses (2R)-2,3-dihydroxy-3-methylbutanoate + NADP(+) = (2S)-2-acetolactate + NADPH + H(+). The catalysed reaction is (2R,3R)-2,3-dihydroxy-3-methylpentanoate + NADP(+) = (S)-2-ethyl-2-hydroxy-3-oxobutanoate + NADPH + H(+). The protein operates within amino-acid biosynthesis; L-isoleucine biosynthesis; L-isoleucine from 2-oxobutanoate: step 2/4. It functions in the pathway amino-acid biosynthesis; L-valine biosynthesis; L-valine from pyruvate: step 2/4. Its function is as follows. Involved in the biosynthesis of branched-chain amino acids (BCAA). Catalyzes an alkyl-migration followed by a ketol-acid reduction of (S)-2-acetolactate (S2AL) to yield (R)-2,3-dihydroxy-isovalerate. In the isomerase reaction, S2AL is rearranged via a Mg-dependent methyl migration to produce 3-hydroxy-3-methyl-2-ketobutyrate (HMKB). In the reductase reaction, this 2-ketoacid undergoes a metal-dependent reduction by NADPH to yield (R)-2,3-dihydroxy-isovalerate. In Shouchella clausii (strain KSM-K16) (Alkalihalobacillus clausii), this protein is Ketol-acid reductoisomerase (NADP(+)).